A 74-amino-acid polypeptide reads, in one-letter code: Cecropin-P4 (74 aa).

The signal sequence occupies residues 1 to 13; it reads MFLMYLLVQTTES. Residues 45–74 constitute a propeptide, removed in mature form; that stretch reads HRRSVAHQEEASLHVKTDELPSPDTVREQL. Positions 51–74 are disordered; the sequence is HQEEASLHVKTDELPSPDTVREQL.

This sequence belongs to the cecropin family. In terms of tissue distribution, expressed in the body wall, intestine, uterus and ovary.

The protein localises to the secreted. Functionally, has antibacterial activity against several Gram-positive and Gram-negative bacteria. Is weakly active against yeasts. Acts by a nonpore mechanism. This is Cecropin-P4 (ASCEC-4) from Ascaris suum (Pig roundworm).